Consider the following 361-residue polypeptide: Phospho-N-acetylmuramoyl-pentapeptide-transferase (361 aa).

The next 10 helical transmembrane spans lie at 27 to 47, 70 to 90, 97 to 117, 134 to 154, 167 to 187, 199 to 219, 236 to 256, 263 to 283, 288 to 308, and 338 to 358; these read ILAS…MIRW, GTPT…CLLW, SLWL…VDDY, YFWQ…NASL, TVTW…IVGS, GLAI…AYAS, TGEL…FLWY, VFMG…VAVV, LVLL…ILQV, and KVIV…LATL.

This sequence belongs to the glycosyltransferase 4 family. MraY subfamily. Mg(2+) is required as a cofactor.

The protein localises to the cell inner membrane. The catalysed reaction is UDP-N-acetyl-alpha-D-muramoyl-L-alanyl-gamma-D-glutamyl-meso-2,6-diaminopimeloyl-D-alanyl-D-alanine + di-trans,octa-cis-undecaprenyl phosphate = di-trans,octa-cis-undecaprenyl diphospho-N-acetyl-alpha-D-muramoyl-L-alanyl-D-glutamyl-meso-2,6-diaminopimeloyl-D-alanyl-D-alanine + UMP. It participates in cell wall biogenesis; peptidoglycan biosynthesis. Catalyzes the initial step of the lipid cycle reactions in the biosynthesis of the cell wall peptidoglycan: transfers peptidoglycan precursor phospho-MurNAc-pentapeptide from UDP-MurNAc-pentapeptide onto the lipid carrier undecaprenyl phosphate, yielding undecaprenyl-pyrophosphoryl-MurNAc-pentapeptide, known as lipid I. This chain is Phospho-N-acetylmuramoyl-pentapeptide-transferase, found in Legionella pneumophila subsp. pneumophila (strain Philadelphia 1 / ATCC 33152 / DSM 7513).